Consider the following 397-residue polypeptide: Elongation factor Tu (397 aa).

The 197-residue stretch at 10–206 (KPHCNIGTIG…AVDTWIPDPQ (197 aa)) folds into the tr-type G domain. A G1 region spans residues 19–26 (GHVDHGKT). 19–26 (GHVDHGKT) is a GTP binding site. Mg(2+) is bound at residue threonine 26. A G2 region spans residues 61 to 65 (GITIS). Residues 82-85 (DCPG) form a G3 region. GTP is bound by residues 82–86 (DCPGH) and 137–140 (NKCD). Residues 137 to 140 (NKCD) form a G4 region. The segment at 175–177 (SAL) is G5.

It belongs to the TRAFAC class translation factor GTPase superfamily. Classic translation factor GTPase family. EF-Tu/EF-1A subfamily. In terms of assembly, monomer.

The protein localises to the cytoplasm. The enzyme catalyses GTP + H2O = GDP + phosphate + H(+). GTP hydrolase that promotes the GTP-dependent binding of aminoacyl-tRNA to the A-site of ribosomes during protein biosynthesis. The protein is Elongation factor Tu of Lachnoclostridium phytofermentans (strain ATCC 700394 / DSM 18823 / ISDg) (Clostridium phytofermentans).